Here is a 194-residue protein sequence, read N- to C-terminus: Dephospho-CoA kinase (194 aa).

Positions 4 to 194 (VIGLTGSIGM…VKEILQKLGA (191 aa)) constitute a DPCK domain. Residue 12–17 (GMGKTT) coordinates ATP.

Belongs to the CoaE family.

Its subcellular location is the cytoplasm. It carries out the reaction 3'-dephospho-CoA + ATP = ADP + CoA + H(+). Its pathway is cofactor biosynthesis; coenzyme A biosynthesis; CoA from (R)-pantothenate: step 5/5. In terms of biological role, catalyzes the phosphorylation of the 3'-hydroxyl group of dephosphocoenzyme A to form coenzyme A. This Agrobacterium fabrum (strain C58 / ATCC 33970) (Agrobacterium tumefaciens (strain C58)) protein is Dephospho-CoA kinase.